A 772-amino-acid polypeptide reads, in one-letter code: Metal transporter CNNM4 (772 aa).

Residues 1-175 (MAPGGGGGRR…SLLFMVEEHG (175 aa)) are Extracellular-facing. N-linked (GlcNAc...) asparagine glycosylation is present at Asn120. A helical membrane pass occupies residues 176 to 196 (RFLPLWLHILLVLVLLVLSGI). In terms of domain architecture, CNNM transmembrane spans 176–356 (RFLPLWLHIL…EPYNDLVKEE (181 aa)). Residues 197–237 (FSGLNLGLMALDPMELRIVQNCGTEKERRYARKIEPIRRKG) are Cytoplasmic-facing. An intramembrane region (helical) is located at residues 238-258 (NYLLCSLLLGNVLVNTSLTIL). Topologically, residues 259–261 (LDN) are cytoplasmic. A helical transmembrane segment spans residues 262–282 (LIGSGIMAVASSTIGIVIFGE). Topologically, residues 283–290 (ILPQALCS) are extracellular. The chain crosses the membrane as a helical span at residues 291–313 (RHGLAVGANTIVLTKIFMLLTFP). At 314 to 772 (LSFPISKLLD…LHRASQEGTI (459 aa)) the chain is on the cytoplasmic side. CBS domains are found at residues 375–436 (MTQL…CTPL) and 443–509 (YNHP…ILDE). The segment at 647–676 (PDRSPAHPTPLSRSASLSYPDRNTDMTPSS) is disordered. Ser658, Ser662, and Ser767 each carry phosphoserine.

This sequence belongs to the ACDP family. As to quaternary structure, interacts with COX11. As to expression, present in spinal cord dorsal horn neurons and in developing teeth (at protein level). In the tooth, higher expression is found in the ameloblasts during the transition and maturation phases of amelogenesis; reduced expression in the odontoblasts.

The protein resides in the cell membrane. Probable metal transporter. The interaction with the metal ion chaperone COX11 suggests that it may play a role in sensory neuron functions. May play a role in biomineralization and retinal function. In Rattus norvegicus (Rat), this protein is Metal transporter CNNM4 (Cnnm4).